Reading from the N-terminus, the 179-residue chain is Fas apoptotic inhibitory molecule 1 (179 aa).

Residue T2 is modified to N-acetylthreonine.

It belongs to the FAIM1 family.

It is found in the cytoplasm. Plays a role as an inducible effector molecule that mediates Fas resistance produced by surface Ig engagement in B cells. The sequence is that of Fas apoptotic inhibitory molecule 1 (FAIM) from Homo sapiens (Human).